We begin with the raw amino-acid sequence, 172 residues long: ATP synthase subunit b (172 aa).

The helical transmembrane segment at 27 to 47 (LAIVIFGLYKFLPPFIGGILE) threads the bilayer.

The protein belongs to the ATPase B chain family. As to quaternary structure, F-type ATPases have 2 components, F(1) - the catalytic core - and F(0) - the membrane proton channel. F(1) has five subunits: alpha(3), beta(3), gamma(1), delta(1), epsilon(1). F(0) has four main subunits: a(1), b(1), b'(1) and c(10-14). The alpha and beta chains form an alternating ring which encloses part of the gamma chain. F(1) is attached to F(0) by a central stalk formed by the gamma and epsilon chains, while a peripheral stalk is formed by the delta, b and b' chains.

The protein resides in the cellular thylakoid membrane. Its function is as follows. F(1)F(0) ATP synthase produces ATP from ADP in the presence of a proton or sodium gradient. F-type ATPases consist of two structural domains, F(1) containing the extramembraneous catalytic core and F(0) containing the membrane proton channel, linked together by a central stalk and a peripheral stalk. During catalysis, ATP synthesis in the catalytic domain of F(1) is coupled via a rotary mechanism of the central stalk subunits to proton translocation. Component of the F(0) channel, it forms part of the peripheral stalk, linking F(1) to F(0). This is ATP synthase subunit b from Prochlorococcus marinus (strain MIT 9313).